A 259-amino-acid polypeptide reads, in one-letter code: Adenosylcobinamide-GDP ribazoletransferase (259 aa).

5 helical membrane-spanning segments follow: residues 43-63 (LAGA…LGLG), 64-84 (ASSM…TGAL), 116-136 (FGVL…ASLV), 141-161 (PINV…LMVW), and 185-205 (TLYT…APVT).

It belongs to the CobS family. The cofactor is Mg(2+).

It localises to the cell inner membrane. It catalyses the reaction alpha-ribazole + adenosylcob(III)inamide-GDP = adenosylcob(III)alamin + GMP + H(+). The enzyme catalyses alpha-ribazole 5'-phosphate + adenosylcob(III)inamide-GDP = adenosylcob(III)alamin 5'-phosphate + GMP + H(+). Its pathway is cofactor biosynthesis; adenosylcobalamin biosynthesis; adenosylcobalamin from cob(II)yrinate a,c-diamide: step 7/7. Joins adenosylcobinamide-GDP and alpha-ribazole to generate adenosylcobalamin (Ado-cobalamin). Also synthesizes adenosylcobalamin 5'-phosphate from adenosylcobinamide-GDP and alpha-ribazole 5'-phosphate. This is Adenosylcobinamide-GDP ribazoletransferase from Allorhizobium ampelinum (strain ATCC BAA-846 / DSM 112012 / S4) (Agrobacterium vitis (strain S4)).